A 349-amino-acid chain; its full sequence is T-cell immunoglobulin and mucin domain-containing protein 2 (349 aa).

A signal peptide spans 1–20 (MVQLQVFISGLLLLLPGAVA). The Extracellular portion of the chain corresponds to 21 to 275 (SYTVVQGHSV…QKLQRNPTKG (255 aa)). Positions 22–123 (YTVVQGHSVT…AFYFVDYLLE (102 aa)) constitute an Ig-like V-type domain. Disulfide bonds link Cys34-Cys107, Cys48-Cys59, and Cys54-Cys106. Asn84 and Asn89 each carry an N-linked (GlcNAc...) asparagine glycan. The disordered stretch occupies residues 128-271 (LPTSPPTRPT…AIPPQKLQRN (144 aa)). The segment covering 136-215 (PTNTGRPTTT…TSTPPTPEQT (80 aa)) has biased composition (low complexity). Residues 222–260 (ATTYYPDQTTAEVTEAPSHTPTDWNNTATSSDDSWNSDT) show a composition bias toward polar residues. The helical transmembrane segment at 276–296 (FYVGMSFAALLLLLLASTVAI) threads the bilayer. The Cytoplasmic segment spans residues 297-349 (TRYMVMRKNSGSLRFVAFPVSKIGASQNKVVEQARIEDEVYIIEDSPYFEEES).

The protein belongs to the immunoglobulin superfamily. TIM family. Homodimer.

It localises to the cell membrane. In terms of biological role, probable receptor for SEMA4A involved in the regulation of T-cell function. The interaction with SEMA4A enhances T-cell activation. This is T-cell immunoglobulin and mucin domain-containing protein 2 (Timd2) from Rattus norvegicus (Rat).